Here is a 178-residue protein sequence, read N- to C-terminus: Translation initiation factor IF-3 (178 aa).

This sequence belongs to the IF-3 family. Monomer.

It localises to the cytoplasm. Its function is as follows. IF-3 binds to the 30S ribosomal subunit and shifts the equilibrium between 70S ribosomes and their 50S and 30S subunits in favor of the free subunits, thus enhancing the availability of 30S subunits on which protein synthesis initiation begins. This is Translation initiation factor IF-3 from Nautilia profundicola (strain ATCC BAA-1463 / DSM 18972 / AmH).